The sequence spans 147 residues: MQITKTLVATLFAASTAFAAPTPADKSMMAAVPEWTITNLKRVCNAGNTSCTWTFGVDTHLATATSCTYVVKANANASQASGGPVTCGPYTITSSWSGQFGPNNGFTTFAVTDFSKKLIVWPAYTDVQVQAGKVVSPNQSYAPANLP.

The first 19 residues, 1–19 (MQITKTLVATLFAASTAFA), serve as a signal peptide directing secretion. 2 cysteine pairs are disulfide-bonded: Cys44-Cys51 and Cys67-Cys87.

In terms of assembly, homodimer.

The protein localises to the secreted. Stimulates salicylic acid signaling in host plant roots. In Hypocrea virens (strain Gv29-8 / FGSC 10586) (Gliocladium virens), this protein is Effector TSP1.